The following is a 271-amino-acid chain: ATP synthase subunit a (271 aa).

The next 5 helical transmembrane spans lie at 47–67 (WENI…AYLG), 107–127 (FLGT…VPLM), 133–153 (SLNI…FLNI), 209–229 (ILIG…ETFV), and 235–255 (LPFM…FTLL).

The protein belongs to the ATPase A chain family. As to quaternary structure, F-type ATPases have 2 components, CF(1) - the catalytic core - and CF(0) - the membrane proton channel. CF(1) has five subunits: alpha(3), beta(3), gamma(1), delta(1), epsilon(1). CF(0) has three main subunits: a(1), b(2) and c(9-12). The alpha and beta chains form an alternating ring which encloses part of the gamma chain. CF(1) is attached to CF(0) by a central stalk formed by the gamma and epsilon chains, while a peripheral stalk is formed by the delta and b chains.

The protein resides in the cell inner membrane. Key component of the proton channel; it plays a direct role in the translocation of protons across the membrane. This chain is ATP synthase subunit a, found in Protochlamydia amoebophila (strain UWE25).